A 158-amino-acid polypeptide reads, in one-letter code: Small ribosomal subunit protein eS10 (158 aa).

The tract at residues 99–158 (ETVRRGAVGRPDAPARSAEDRSAYRRAPTTPAAHDKKADVGPGSADLEFRGGFGRGRPAP) is disordered. Residues 149 to 158 (GGFGRGRPAP) show a composition bias toward gly residues.

It belongs to the eukaryotic ribosomal protein eS10 family.

The protein localises to the cytoplasm. The protein is Small ribosomal subunit protein eS10 (RpS10) of Spodoptera frugiperda (Fall armyworm).